A 215-amino-acid polypeptide reads, in one-letter code: Large ribosomal subunit protein uL16m (215 aa).

The N-terminal 36 residues, 1-36 (MALQQYNKFPFFFSGILGPTRLNGLQMPPIQTMVRW), are a transit peptide targeting the mitochondrion.

This sequence belongs to the universal ribosomal protein uL16 family. As to quaternary structure, component of the mitochondrial large ribosomal subunit (mt-LSU). Mature yeast 74S mitochondrial ribosomes consist of a small (37S) and a large (54S) subunit. The 37S small subunit contains a 15S ribosomal RNA (15S mt-rRNA) and at least 32 different proteins. The 54S large subunit contains a 21S rRNA (21S mt-rRNA) and at least 45 different proteins.

It is found in the mitochondrion. In terms of biological role, component of the mitochondrial ribosome (mitoribosome), a dedicated translation machinery responsible for the synthesis of mitochondrial genome-encoded proteins, including at least some of the essential transmembrane subunits of the mitochondrial respiratory chain. The mitoribosomes are attached to the mitochondrial inner membrane and translation products are cotranslationally integrated into the membrane. This is Large ribosomal subunit protein uL16m (mrpl16) from Schizosaccharomyces pombe (strain 972 / ATCC 24843) (Fission yeast).